The chain runs to 91 residues: Alpha-defensin 31 (91 aa).

The N-terminal stretch at 1–19 (MKKLVLLFALVLLAFQVQA) is a signal peptide. Residues 20 to 65 (DSIQNTDEETKTEEQQGEEDQAVSVSFGDPQGSGLQDAALGWGRRC) constitute a propeptide that is removed on maturation. A disordered region spans residues 22-55 (IQNTDEETKTEEQQGEEDQAVSVSFGDPQGSGLQ). A run of 6 repeats spans residues 65-67 (CPR), 68-70 (CPP), 71-73 (CPR), 77-79 (CPR), 80-82 (CPT), and 83-85 (CPR). A 6 X 3 AA tandem repeats of C-P-X region spans residues 65–85 (CPRCPPCPRCSWCPRCPTCPR).

The protein belongs to the alpha-defensin family. In terms of tissue distribution, paneth cells of the small bowel.

It localises to the secreted. In terms of biological role, apparent precursor of a secreted, cationic, proline- and cysteine-rich peptide that contains Cys-Pro-Xaa repeats. Unlike cryptdin, the proposed mature peptide region lacks the structural motif characteristic of defensins. It may have microbicidal activities. The polypeptide is Alpha-defensin 31 (Mus musculus (Mouse)).